The following is a 524-amino-acid chain: Probable lipid II flippase MurJ (524 aa).

The next 13 membrane-spanning stretches (helical) occupy residues 44–64 (IFGA…PNLL), 103–123 (LLTL…PWVI), 146–166 (ITFP…ILNT), 172–192 (IPAF…LFAA), 195–215 (FNPP…LQLV), 250–270 (ILGV…ASFL), 284–304 (LMEF…LPSL), 322–342 (WGLR…GILA), 367–387 (LIAY…APGF), 396–416 (PVKI…AFIG), 420–440 (HAGL…LLYW), 456–476 (WFLM…FGVL), and 494–514 (LMAV…VLGF).

It belongs to the MurJ/MviN family.

It is found in the cell inner membrane. It participates in cell wall biogenesis; peptidoglycan biosynthesis. Involved in peptidoglycan biosynthesis. Transports lipid-linked peptidoglycan precursors from the inner to the outer leaflet of the cytoplasmic membrane. This Salmonella typhimurium (strain LT2 / SGSC1412 / ATCC 700720) protein is Probable lipid II flippase MurJ.